The following is a 92-amino-acid chain: Alpha-elapitoxin-As2a (92 aa).

Positions M1 to G21 are cleaved as a signal peptide. 5 disulfide bridges follow: C24-C41, C34-C62, C47-C51, C66-C77, and C78-C83.

The protein belongs to the three-finger toxin family. Long-chain subfamily. Type II alpha-neurotoxin sub-subfamily. In terms of tissue distribution, expressed by the venom gland.

The protein localises to the secreted. Its function is as follows. Binds with high affinity to muscular (alpha-1/CHRNA1) and neuronal (alpha-7/CHRNA7) nicotinic acetylcholine receptor (nAChR) and inhibits acetylcholine from binding to the receptor, thereby impairing neuromuscular and neuronal transmission. This Austrelaps superbus (Lowland copperhead snake) protein is Alpha-elapitoxin-As2a.